The sequence spans 335 residues: Transcription factor IIIA (335 aa).

9 consecutive C2H2-type zinc fingers follow at residues 13 to 37 (YICS…LCKH), 43 to 67 (FPCT…SMTH), 73 to 98 (CKCD…QRAH), 105 to 129 (YECY…QYIH), 135 to 159 (FKCN…EKVH), 162 to 188 (YPCQ…AASH), 192 to 214 (TICD…KRTH), 221 to 246 (YKCP…LSFH), and 252 to 276 (FACG…ANTH). Residues 269–280 (LDRHANTHDPEK) are compositionally biased toward basic and acidic residues. The segment at 269-335 (LDRHANTHDP…ATAMQNLSIK (67 aa)) is disordered. Over residues 281 to 292 (KKMKKPRPKKSL) the composition is skewed to basic residues.

Its subcellular location is the nucleus. Involved in ribosomal large subunit biogenesis. Interacts with the internal control region (ICR) of approximately 50 bases within the 5S RNA genes, is required for correct transcription of these genes by RNA polymerase III. Also binds the transcribed 5S RNA's. The sequence is that of Transcription factor IIIA (gtf3a) from Lithobates pipiens (Northern leopard frog).